The primary structure comprises 125 residues: Small ribosomal subunit protein uS13 (125 aa).

Belongs to the universal ribosomal protein uS13 family. Part of the 30S ribosomal subunit. Forms a loose heterodimer with protein S19. Forms two bridges to the 50S subunit in the 70S ribosome.

In terms of biological role, located at the top of the head of the 30S subunit, it contacts several helices of the 16S rRNA. In the 70S ribosome it contacts the 23S rRNA (bridge B1a) and protein L5 of the 50S subunit (bridge B1b), connecting the 2 subunits; these bridges are implicated in subunit movement. Contacts the tRNAs in the A and P-sites. The polypeptide is Small ribosomal subunit protein uS13 (Rickettsia felis (strain ATCC VR-1525 / URRWXCal2) (Rickettsia azadi)).